The chain runs to 240 residues: Small ribosomal subunit protein uS3 (240 aa).

The KH type-2 domain occupies 39–109; the sequence is IRQHIDANLN…QIRINVVEVN (71 aa). Residues 216–240 form a disordered region; that stretch reads TSAANAAPLPRRKSRRQQFEDRSEQ.

It belongs to the universal ribosomal protein uS3 family. As to quaternary structure, part of the 30S ribosomal subunit. Forms a tight complex with proteins S10 and S14.

Functionally, binds the lower part of the 30S subunit head. Binds mRNA in the 70S ribosome, positioning it for translation. This Picosynechococcus sp. (strain ATCC 27264 / PCC 7002 / PR-6) (Agmenellum quadruplicatum) protein is Small ribosomal subunit protein uS3.